Consider the following 228-residue polypeptide: 3,4-dihydroxy-2-butanone 4-phosphate synthase (228 aa).

Residues 37-38, Asp42, 150-154, and Glu174 each bind D-ribulose 5-phosphate; these read RE and RPGHT. Glu38 contacts Mg(2+). His153 provides a ligand contact to Mg(2+).

It belongs to the DHBP synthase family. Homodimer. Requires Mg(2+) as cofactor. Mn(2+) serves as cofactor.

The catalysed reaction is D-ribulose 5-phosphate = (2S)-2-hydroxy-3-oxobutyl phosphate + formate + H(+). Its pathway is cofactor biosynthesis; riboflavin biosynthesis; 2-hydroxy-3-oxobutyl phosphate from D-ribulose 5-phosphate: step 1/1. Catalyzes the conversion of D-ribulose 5-phosphate to formate and 3,4-dihydroxy-2-butanone 4-phosphate. In Chloroherpeton thalassium (strain ATCC 35110 / GB-78), this protein is 3,4-dihydroxy-2-butanone 4-phosphate synthase.